The following is a 355-amino-acid chain: MCFGGRGKDDEAEASRSRELDKQIRADEKRLSKEVKLLLLGAGESGKSTILKQMKLIYAQGFSKNEKLEWRPVIFANILQSFRLIFDAMNEFNIKLEDEDNEKNMVQMMVDYEMRGDEPLPLEYFEPAKKLWQDSGVRQAIEKGNEFALHDNLQYFCSDLDRLWDRNYVPSDQDLLRSRLRTTGITETVFDLGQLTYRMFDVGGQRSERKKWIHCFENVNCLLFLVAISGYDQCLVEDKDGNQMNEALMLWESIANSHWFTKSALILFLNKIDLFKEKLPRSPITNHGFTDYHGPPDDSKQASKYFMDKFRALNRNPDKEIYGHFTNATDTNLLKITMGSVQDMIIQRNLKQLIL.

The tract at residues 1 to 20 (MCFGGRGKDDEAEASRSREL) is disordered. Positions 33-355 (KEVKLLLLGA…IQRNLKQLIL (323 aa)) constitute a G-alpha domain. The G1 motif stretch occupies residues 36–49 (KLLLLGAGESGKST). Positions 44, 45, 46, 47, 48, 49, 151, 176, 182, 204, 270, 271, 273, and 328 each coordinate GTP. Ser48 serves as a coordination point for Mg(2+). A G2 motif region spans residues 174–182 (DLLRSRLRT). A Mg(2+)-binding site is contributed by Thr182. Residues 197 to 206 (YRMFDVGGQR) form a G3 motif region. The interval 266–273 (ILFLNKID) is G4 motif. Positions 326–331 (TNATDT) are G5 motif.

It belongs to the G-alpha family. G(q) subfamily. G proteins are composed of 3 units; alpha, beta and gamma. The alpha chain contains the guanine nucleotide binding site. The cofactor is Mg(2+).

Functionally, guanine nucleotide-binding proteins (G proteins) are involved as modulators or transducers in various transmembrane signaling systems. The chain is Guanine nucleotide-binding protein alpha-2 subunit (gna-2) from Neurospora crassa (strain ATCC 24698 / 74-OR23-1A / CBS 708.71 / DSM 1257 / FGSC 987).